The chain runs to 466 residues: Soluble pyridine nucleotide transhydrogenase (466 aa).

FAD is bound at residue 36–45; sequence ERYHNVGGGC.

Belongs to the class-I pyridine nucleotide-disulfide oxidoreductase family. The cofactor is FAD.

It localises to the cytoplasm. It carries out the reaction NAD(+) + NADPH = NADH + NADP(+). Functionally, conversion of NADPH, generated by peripheral catabolic pathways, to NADH, which can enter the respiratory chain for energy generation. This chain is Soluble pyridine nucleotide transhydrogenase, found in Citrobacter koseri (strain ATCC BAA-895 / CDC 4225-83 / SGSC4696).